Reading from the N-terminus, the 87-residue chain is Large ribosomal subunit protein eL34 (87 aa).

Belongs to the eukaryotic ribosomal protein eL34 family.

The chain is Large ribosomal subunit protein eL34 from Sulfurisphaera tokodaii (strain DSM 16993 / JCM 10545 / NBRC 100140 / 7) (Sulfolobus tokodaii).